A 143-amino-acid chain; its full sequence is Transcriptional regulator MraZ (143 aa).

2 SpoVT-AbrB domains span residues glutamate 5–glutamate 47 and alanine 76–arginine 119.

Belongs to the MraZ family. In terms of assembly, forms oligomers.

The protein localises to the cytoplasm. The protein resides in the nucleoid. The protein is Transcriptional regulator MraZ of Heliobacterium modesticaldum (strain ATCC 51547 / Ice1).